A 192-amino-acid chain; its full sequence is Protein GrpE (192 aa).

The segment covering Met1 to Gln20 has biased composition (basic and acidic residues). The segment at Met1–Glu39 is disordered. Residues Val25–Val34 are compositionally biased toward acidic residues.

This sequence belongs to the GrpE family. In terms of assembly, homodimer.

It is found in the cytoplasm. In terms of biological role, participates actively in the response to hyperosmotic and heat shock by preventing the aggregation of stress-denatured proteins, in association with DnaK and GrpE. It is the nucleotide exchange factor for DnaK and may function as a thermosensor. Unfolded proteins bind initially to DnaJ; upon interaction with the DnaJ-bound protein, DnaK hydrolyzes its bound ATP, resulting in the formation of a stable complex. GrpE releases ADP from DnaK; ATP binding to DnaK triggers the release of the substrate protein, thus completing the reaction cycle. Several rounds of ATP-dependent interactions between DnaJ, DnaK and GrpE are required for fully efficient folding. This is Protein GrpE from Bacillus cereus (strain ATCC 10987 / NRS 248).